The primary structure comprises 348 residues: Rhodopsin (348 aa).

Methionine 1 is modified (N-acetylmethionine). Residues 1–36 (MNGTEGPNFYVPFSNATGVVRSPFEYPQYYLAEPWQ) lie on the Extracellular side of the membrane. N-linked (GlcNAc...) asparagine glycosylation is found at asparagine 2 and asparagine 15. A helical transmembrane segment spans residues 37–61 (FSMLAAYMFMLIVLGFPINFLTLYV). Residues 62–73 (TVQHKKLRTPLN) lie on the Cytoplasmic side of the membrane. The chain crosses the membrane as a helical span at residues 74-96 (YILLNLAVADLFMVFGGFTTTLY). Residues 97-110 (TSLHGYFVFGPTGC) lie on the Extracellular side of the membrane. The cysteines at positions 110 and 187 are disulfide-linked. The helical transmembrane segment at 111 to 133 (NLEGFFATLGGEIALWSLVVLAI) threads the bilayer. The short motif at 134-136 (ERY) is the 'Ionic lock' involved in activated form stabilization element. Over 134–152 (ERYVVVCKPMSNFRFGENH) the chain is Cytoplasmic. A helical transmembrane segment spans residues 153 to 173 (AIMGLVFTWIMALACAAPPLV). Residues 174-202 (GWSRYIPEGMQCSCGIDYYTLKPEVNNES) are Extracellular-facing. Position 201 (glutamate 201) interacts with Zn(2+). The helical transmembrane segment at 203 to 224 (FVIYMFVVHFFIPLFVIFFCYG) threads the bilayer. Residues 225 to 252 (QLVFTVKEAAAQQQESATTQKAEKEVTR) are Cytoplasmic-facing. Residues 253–274 (MVIIMVIAFLICWLPYAGVAFY) traverse the membrane as a helical segment. Topologically, residues 275-286 (IFTHQGSNFGPI) are extracellular. Glutamine 279 contributes to the Zn(2+) binding site. A helical membrane pass occupies residues 287 to 308 (FMTLPAFFAKTASIYNPVIYIM). At lysine 296 the chain carries N6-(retinylidene)lysine. Over 309-348 (MNKQFRTCMITTLCCGKNPLGDDEASTTASKTETSQVAPA) the chain is Cytoplasmic. Residues cysteine 322 and cysteine 323 are each lipidated (S-palmitoyl cysteine). An interaction with SAG region spans residues 330–348 (DDEASTTASKTETSQVAPA). At serine 334 the chain carries Phosphoserine. Threonine 335 and threonine 336 each carry phosphothreonine. Serine 338 is subject to Phosphoserine. Residues threonine 340 and threonine 342 each carry the phosphothreonine modification. Position 343 is a phosphoserine (serine 343).

The protein belongs to the G-protein coupled receptor 1 family. Opsin subfamily. As to quaternary structure, homodimer. May form a complex composed of RHO, GRK1 and RCVRN in a Ca(2+)-dependent manner; RCVRN prevents the interaction between GRK1 and RHO. Interacts with GRK1. Interacts (phosphorylated form) with SAG. Interacts with GNAT1. Interacts with GNAT3. SAG and G-proteins compete for a common binding site. Interacts with PRCD; the interaction promotes PRCD stability. Forms a complex with ASAP1 and ARF4. Forms a complex with ASAP1, RAB11A, Rabin8/RAB3IP, ARF4 and RAB11FIP3; the complex regulates Golgi-to-cilia rhodopsin/RHO transport in photoreceptors. In terms of processing, phosphorylated on some or all of the serine and threonine residues present in the C-terminal region. Contains one covalently linked retinal chromophore. Upon light absorption, the covalently bound 11-cis-retinal is converted to all-trans-retinal. After hydrolysis of the Schiff base and release of the covalently bound all-trans-retinal, active rhodopsin is regenerated by binding of a fresh molecule of 11-cis-retinal.

The protein resides in the membrane. It localises to the cell projection. It is found in the cilium. Its subcellular location is the photoreceptor outer segment. Photoreceptor required for image-forming vision at low light intensity. Required for photoreceptor cell viability after birth. Light-induced isomerization of 11-cis to all-trans retinal triggers a conformational change that activates signaling via G-proteins. Subsequent receptor phosphorylation mediates displacement of the bound G-protein alpha subunit by the arrestin SAG and terminates signaling. In Otolemur crassicaudatus (Brown greater galago), this protein is Rhodopsin (RHO).